The following is a 120-amino-acid chain: Ribonuclease P protein component (120 aa).

Belongs to the RnpA family. As to quaternary structure, consists of a catalytic RNA component (M1 or rnpB) and a protein subunit.

It carries out the reaction Endonucleolytic cleavage of RNA, removing 5'-extranucleotides from tRNA precursor.. RNaseP catalyzes the removal of the 5'-leader sequence from pre-tRNA to produce the mature 5'-terminus. It can also cleave other RNA substrates such as 4.5S RNA. The protein component plays an auxiliary but essential role in vivo by binding to the 5'-leader sequence and broadening the substrate specificity of the ribozyme. The sequence is that of Ribonuclease P protein component from Chlamydia trachomatis serovar D (strain ATCC VR-885 / DSM 19411 / UW-3/Cx).